We begin with the raw amino-acid sequence, 250 residues long: 23S rRNA (guanosine-2'-O-)-methyltransferase RlmB (250 aa).

G198, I218, and L227 together coordinate S-adenosyl-L-methionine.

The protein belongs to the class IV-like SAM-binding methyltransferase superfamily. RNA methyltransferase TrmH family. RlmB subfamily.

The protein resides in the cytoplasm. It catalyses the reaction guanosine(2251) in 23S rRNA + S-adenosyl-L-methionine = 2'-O-methylguanosine(2251) in 23S rRNA + S-adenosyl-L-homocysteine + H(+). Specifically methylates the ribose of guanosine 2251 in 23S rRNA. This Coxiella burnetii (strain RSA 493 / Nine Mile phase I) protein is 23S rRNA (guanosine-2'-O-)-methyltransferase RlmB.